Here is a 1330-residue protein sequence, read N- to C-terminus: Kinectin (1330 aa).

Topologically, residues 1 to 6 are cytoplasmic; it reads MEFYES. Residues 7-29 form a helical; Signal-anchor for type II membrane protein membrane-spanning segment; it reads TYFIVLIPSVVITVIFLFFWLFM. Residues 30–1330 are Lumenal-facing; sequence KETLYDEVLA…KEKEHYQVLE (1301 aa). Disordered stretches follow at residues 49 to 81 and 108 to 218; these read PTKT…ESVP and SSSV…KQKA. Residues Ser75 and Ser77 each carry the phosphoserine modification. A compositionally biased stretch (basic residues) spans 113 to 122; that stretch reads ERKKKEKKHK. Residues 123–135 are compositionally biased toward basic and acidic residues; that stretch reads PVLEEQVTKESDV. The residue at position 153 (Thr153) is a Phosphothreonine. Ser156 bears the Phosphoserine mark. Residues 161–171 show a composition bias toward basic residues; it reads SKKKPGQKKSK. N-linked (GlcNAc...) asparagine glycosylation is found at Asn172, Asn435, Asn772, Asn904, and Asn1055. The span at 172–182 shows a compositional bias: basic and acidic residues; the sequence is NGSDDQDKKVE. A coiled-coil region spans residues 332–1329; that stretch reads HQLQEKDKLL…TKEKEHYQVL (998 aa). A Phosphoserine modification is found at Ser1085. Residue Asn1236 is glycosylated (N-linked (GlcNAc...) asparagine). The residue at position 1286 (Ser1286) is a Phosphoserine. Asn1302 is a glycosylation site (N-linked (GlcNAc...) asparagine).

It belongs to the kinectin family. As to quaternary structure, parallel homodimers formed between the membrane-bound and the cytosolic form, and also between 2 cytosolic forms. As to expression, expressed in male brain, heart, kidney, liver, lung, spleen and testis.

It localises to the endoplasmic reticulum membrane. Its function is as follows. Receptor for kinesin thus involved in kinesin-driven vesicle motility. In Vulpes vulpes (Red fox), this protein is Kinectin (KTN1).